The sequence spans 400 residues: Glutamyl-tRNA reductase (400 aa).

Residues 45–48, serine 103, 108–110, and glutamine 114 each bind substrate; these read TCNR and EDQ. Cysteine 46 functions as the Nucleophile in the catalytic mechanism. 179–184 contacts NADP(+); sequence GYGEIG.

It belongs to the glutamyl-tRNA reductase family. In terms of assembly, homodimer.

It catalyses the reaction (S)-4-amino-5-oxopentanoate + tRNA(Glu) + NADP(+) = L-glutamyl-tRNA(Glu) + NADPH + H(+). The protein operates within porphyrin-containing compound metabolism; protoporphyrin-IX biosynthesis; 5-aminolevulinate from L-glutamyl-tRNA(Glu): step 1/2. Functionally, catalyzes the NADPH-dependent reduction of glutamyl-tRNA(Glu) to glutamate 1-semialdehyde (GSA). This is Glutamyl-tRNA reductase from Clostridium perfringens (strain 13 / Type A).